A 120-amino-acid polypeptide reads, in one-letter code: Large ribosomal subunit protein eL34z (120 aa).

The disordered stretch occupies residues 31 to 51 (VYQTTKKRASGPKCPVTGKRI).

This sequence belongs to the eukaryotic ribosomal protein eL34 family.

The sequence is that of Large ribosomal subunit protein eL34z (RPL34A) from Arabidopsis thaliana (Mouse-ear cress).